The chain runs to 202 residues: V-type proton ATPase subunit E (202 aa).

This sequence belongs to the V-ATPase E subunit family.

In terms of biological role, produces ATP from ADP in the presence of a proton gradient across the membrane. The chain is V-type proton ATPase subunit E from Halothermothrix orenii (strain H 168 / OCM 544 / DSM 9562).